The chain runs to 242 residues: DNA repair protein RecO (242 aa).

The protein belongs to the RecO family.

Involved in DNA repair and RecF pathway recombination. The polypeptide is DNA repair protein RecO (Bacteroides fragilis (strain ATCC 25285 / DSM 2151 / CCUG 4856 / JCM 11019 / LMG 10263 / NCTC 9343 / Onslow / VPI 2553 / EN-2)).